Reading from the N-terminus, the 218-residue chain is CD99 antigen-like protein 2 (218 aa).

The first 25 residues, 1-25 (MVAWRSAFLVCLAFSLATLVQRGSG), serve as a signal peptide directing secretion. Topologically, residues 26–136 (DFDDFNLKDA…PGSGMVAETG (111 aa)) are extracellular. Residues 72–128 (LADALDDRNDRDDGRRKPIAGGGGFSDKDLEDIVGGGEYKPDKGKGDGRYGSNDDPG) form a disordered region. Composition is skewed to basic and acidic residues over residues 76 to 87 (LDDRNDRDDGRR) and 110 to 119 (YKPDKGKGDG). A glycan (O-linked (Xyl...) (chondroitin sulfate) serine) is linked at serine 129. Residues 137 to 157 (TIAGVASALAMALIGAVSSYI) form a helical membrane-spanning segment. Residues 158 to 218 (SYQQKKFCFS…EPPPSEPARI (61 aa)) lie on the Cytoplasmic side of the membrane.

The protein belongs to the CD99 family. Post-translationally, O-glycosylated.

The protein localises to the cell membrane. It is found in the cell junction. The protein resides in the secreted. In terms of biological role, plays a role in a late step of leukocyte extravasation helping cells to overcome the endothelial basement membrane. Acts at the same site as, but independently of, PECAM1. Homophilic adhesion molecule, but these interactions may not be required for cell aggregation. The chain is CD99 antigen-like protein 2 (CD99L2) from Pongo abelii (Sumatran orangutan).